The following is a 611-amino-acid chain: Elongation factor 4 (611 aa).

The tr-type G domain maps to 12–193 (AVIRNFCIIA…TIVAKVPAPE (182 aa)). GTP-binding positions include 24-29 (DHGKST) and 140-143 (NKID).

The protein belongs to the TRAFAC class translation factor GTPase superfamily. Classic translation factor GTPase family. LepA subfamily.

The protein resides in the cell membrane. The enzyme catalyses GTP + H2O = GDP + phosphate + H(+). Required for accurate and efficient protein synthesis under certain stress conditions. May act as a fidelity factor of the translation reaction, by catalyzing a one-codon backward translocation of tRNAs on improperly translocated ribosomes. Back-translocation proceeds from a post-translocation (POST) complex to a pre-translocation (PRE) complex, thus giving elongation factor G a second chance to translocate the tRNAs correctly. Binds to ribosomes in a GTP-dependent manner. The sequence is that of Elongation factor 4 from Cutibacterium acnes (strain DSM 16379 / KPA171202) (Propionibacterium acnes).